The primary structure comprises 197 residues: Proteasome subunit beta 1 (197 aa).

A propeptide spans 1–6 (removed in mature form; by autocatalysis); that stretch reads MNRKTG. The Nucleophile role is filled by threonine 7.

It belongs to the peptidase T1B family. In terms of assembly, the 20S proteasome core is composed of 14 alpha and 14 beta subunits that assemble into four stacked heptameric rings, resulting in a barrel-shaped structure. The two inner rings, each composed of seven catalytic beta subunits, are sandwiched by two outer rings, each composed of seven alpha subunits. The catalytic chamber with the active sites is on the inside of the barrel. Has a gated structure, the ends of the cylinder being occluded by the N-termini of the alpha-subunits. Is capped at one or both ends by the proteasome regulatory ATPase, PAN.

It is found in the cytoplasm. The enzyme catalyses Cleavage of peptide bonds with very broad specificity.. Its activity is regulated as follows. The formation of the proteasomal ATPase PAN-20S proteasome complex, via the docking of the C-termini of PAN into the intersubunit pockets in the alpha-rings, triggers opening of the gate for substrate entry. Interconversion between the open-gate and close-gate conformations leads to a dynamic regulation of the 20S proteasome proteolysis activity. Its function is as follows. Component of the proteasome core, a large protease complex with broad specificity involved in protein degradation. The chain is Proteasome subunit beta 1 from Pyrococcus abyssi (strain GE5 / Orsay).